The sequence spans 107 residues: uncharacterized protein (107 aa).

The signal sequence occupies residues 1 to 20; it reads MYIKGRLIFFFVVLVIALCS.

This is an uncharacterized protein from Listeria monocytogenes serovar 1/2a (strain ATCC BAA-679 / EGD-e).